A 392-amino-acid chain; its full sequence is MSKGQAQQQSAFKQLFTEFFNLGGDFSKVSKDLKKPLKTYVKESYPHFLVTDGYFFVQPHFTKEAVAEFHQKFPNVNIVDLHDKVIVINSWSLELRRVNSAEVFTSYANLEARLVVHSFKPNLQERLNPTRYPVNLFRDDEFKTIIQHFRHQALQQSIAKNTKQESLPDISKLSGADAAGKKTKVDGGIVKTGASKGDEFADFSFKEGSTAVLKIQDIFVQEKGKDALKRIQDQQVESVQVQPKVRGGAKGKKKAATKSATKKTVAAKKTAESADVRKSVDKIVKYTPNKPSSRKETPQKSQSAPAAGKSSAKRTTTGSKTKIPANPSPSGKKSTKTTDQMTMAQFKKYLDWHEKKKGGKTSSGGKVLGKRSAGKASATSGKASKASKRSKK.

Positions 234 to 392 (QQVESVQVQP…ASKASKRSKK (159 aa)) are disordered. Residues 247-256 (GGAKGKKKAA) show a composition bias toward basic residues. Residues 257 to 268 (TKSATKKTVAAK) are compositionally biased toward low complexity. Residues 269 to 284 (KTAESADVRKSVDKIV) are compositionally biased toward basic and acidic residues. The span at 328–343 (SPSGKKSTKTTDQMTM) shows a compositional bias: polar residues. Residues 374–384 (GKASATSGKAS) are compositionally biased toward low complexity.

In terms of assembly, heterodimer of an alpha and a beta subunit.

It is found in the nucleus. Its subcellular location is the chromosome. It localises to the telomere. May function as protective capping of the single-stranded telomeric overhang. May also participate in telomere length regulation during DNA replication. In Stylonychia mytilus (Ciliate), this protein is Telomere-binding protein subunit beta (STY43).